The following is a 326-amino-acid chain: Protein SEH1 (326 aa).

5 WD repeats span residues 7 to 46 (TLDS…SSTF), 54 to 95 (VSES…AHGL), 105 to 146 (NKSS…ELKN), 224 to 266 (DKGD…DLEG), and 278 to 317 (GHQG…EWHE).

Belongs to the WD repeat SEC13 family. Part of the nuclear pore complex (NPC). The NPC has an eight-fold symmetrical structure comprising a central transport channel and two rings, the cytoplasmic and nuclear rings, to which eight filaments are attached. The cytoplasmic filaments have loose ends, while the nuclear filaments are joined in a distal ring, forming a nuclear basket. NPCs are highly dynamic in configuration and composition, and can be devided in 3 subcomplexes, the NUP62 subcomplex, the NUP107-160 subcomplex and the NUP93 subcomplex, containing approximately 30 different nucleoporin proteins.

Its subcellular location is the nucleus envelope. It localises to the nucleus. The protein resides in the cytoplasm. It is found in the nuclear pore complex. Required for proper export of mRNAs from the nucleus to the cytoplasm. This is Protein SEH1 from Arabidopsis thaliana (Mouse-ear cress).